Reading from the N-terminus, the 1393-residue chain is DNA-directed RNA polymerase subunit beta' (1393 aa).

Zn(2+) contacts are provided by Cys72, Cys74, Cys87, and Cys90. Residues Asp463, Asp465, and Asp467 each contribute to the Mg(2+) site. Zn(2+) is bound by residues Cys812, Cys887, Cys894, and Cys897.

Belongs to the RNA polymerase beta' chain family. In terms of assembly, the RNAP catalytic core consists of 2 alpha, 1 beta, 1 beta' and 1 omega subunit. When a sigma factor is associated with the core the holoenzyme is formed, which can initiate transcription. Requires Mg(2+) as cofactor. Zn(2+) serves as cofactor.

The catalysed reaction is RNA(n) + a ribonucleoside 5'-triphosphate = RNA(n+1) + diphosphate. In terms of biological role, DNA-dependent RNA polymerase catalyzes the transcription of DNA into RNA using the four ribonucleoside triphosphates as substrates. The protein is DNA-directed RNA polymerase subunit beta' of Chlamydia caviae (strain ATCC VR-813 / DSM 19441 / 03DC25 / GPIC) (Chlamydophila caviae).